The chain runs to 219 residues: Putative ankyrin repeat protein BB_0399 (219 aa).

ANK repeat units follow at residues 104–133 (YKIS…SLNQ), 137–166 (TGYS…DLSF), and 170–199 (NRKT…YIDD).

In Borreliella burgdorferi (strain ATCC 35210 / DSM 4680 / CIP 102532 / B31) (Borrelia burgdorferi), this protein is Putative ankyrin repeat protein BB_0399.